A 97-amino-acid chain; its full sequence is M-zodatoxin-Lt7a (97 aa).

Positions 1 to 22 (MKFYVVALALLVAFVCIAESRS) are cleaved as a signal peptide. A propeptide spanning residues 23 to 63 (VETERAVDADLEDDLDDLEEYLEGIAEALELEDFPDTEEAR) is cleaved from the precursor. The Processing quadruplet motif signature appears at 60–63 (EEAR).

Post-translationally, cleavage of the propeptide depends on the processing quadruplet motif (XXXR, with at least one of X being E). In terms of tissue distribution, expressed by the venom gland.

The protein resides in the secreted. Functionally, does not have antimicrobial or antifungal activity. Does not have hemolytic activity against rabbit erythrocytes. However, it causes some conductance changes in planar bilayer membranes, without membrane rupture, suggesting a cytolytic function on other biological targets. It causes paralysis, but is not lethal when injected into insect (M.domestica) larvae. The sequence is that of M-zodatoxin-Lt7a from Lachesana tarabaevi (Spider).